The primary structure comprises 106 residues: ATP-dependent Clp protease adapter protein ClpS (106 aa).

Belongs to the ClpS family. In terms of assembly, binds to the N-terminal domain of the chaperone ClpA.

Functionally, involved in the modulation of the specificity of the ClpAP-mediated ATP-dependent protein degradation. The sequence is that of ATP-dependent Clp protease adapter protein ClpS from Citrobacter koseri (strain ATCC BAA-895 / CDC 4225-83 / SGSC4696).